A 483-amino-acid polypeptide reads, in one-letter code: Kynureninase 1 (483 aa).

Residues Leu147, Thr148, 175 to 178, Ser232, Asp261, His264, and Tyr286 each bind pyridoxal 5'-phosphate; that span reads FPSD. Lys287 is modified (N6-(pyridoxal phosphate)lysine). The pyridoxal 5'-phosphate site is built by Trp326 and Asn354.

Belongs to the kynureninase family. In terms of assembly, homodimer. Pyridoxal 5'-phosphate is required as a cofactor.

The protein resides in the cytoplasm. The catalysed reaction is L-kynurenine + H2O = anthranilate + L-alanine + H(+). It catalyses the reaction 3-hydroxy-L-kynurenine + H2O = 3-hydroxyanthranilate + L-alanine + H(+). Its pathway is amino-acid degradation; L-kynurenine degradation; L-alanine and anthranilate from L-kynurenine: step 1/1. It functions in the pathway cofactor biosynthesis; NAD(+) biosynthesis; quinolinate from L-kynurenine: step 2/3. Its function is as follows. Catalyzes the cleavage of L-kynurenine (L-Kyn) and L-3-hydroxykynurenine (L-3OHKyn) into anthranilic acid (AA) and 3-hydroxyanthranilic acid (3-OHAA), respectively. The sequence is that of Kynureninase 1 (bna5-1) from Aspergillus terreus (strain NIH 2624 / FGSC A1156).